The chain runs to 191 residues: dCTP deaminase (191 aa).

Residues 112 to 117 (KSTYAR), 136 to 138 (TLE), Q157, Y173, and Q183 each bind dCTP. The active-site Proton donor/acceptor is the E138.

Belongs to the dCTP deaminase family. In terms of assembly, homotrimer.

The catalysed reaction is dCTP + H2O + H(+) = dUTP + NH4(+). Its pathway is pyrimidine metabolism; dUMP biosynthesis; dUMP from dCTP (dUTP route): step 1/2. Its function is as follows. Catalyzes the deamination of dCTP to dUTP. In Psychrobacter cryohalolentis (strain ATCC BAA-1226 / DSM 17306 / VKM B-2378 / K5), this protein is dCTP deaminase.